The following is a 354-amino-acid chain: tRNA-specific 2-thiouridylase MnmA (354 aa).

Residues 6-13 and Leu33 contribute to the ATP site; that span reads LLSGGVDS. The active-site Nucleophile is the Cys100. The cysteines at positions 100 and 195 are disulfide-linked. Gly123 is an ATP binding site. An interaction with tRNA region spans residues 145 to 147; sequence KDQ. Catalysis depends on Cys195, which acts as the Cysteine persulfide intermediate.

Belongs to the MnmA/TRMU family.

The protein localises to the cytoplasm. The enzyme catalyses S-sulfanyl-L-cysteinyl-[protein] + uridine(34) in tRNA + AH2 + ATP = 2-thiouridine(34) in tRNA + L-cysteinyl-[protein] + A + AMP + diphosphate + H(+). Its function is as follows. Catalyzes the 2-thiolation of uridine at the wobble position (U34) of tRNA, leading to the formation of s(2)U34. This chain is tRNA-specific 2-thiouridylase MnmA, found in Borrelia recurrentis (strain A1).